We begin with the raw amino-acid sequence, 83 residues long: Short neurotoxin 1 (83 aa).

Residues Met-1 to Thr-21 form the signal peptide. 4 disulfide bridges follow: Cys-24–Cys-45, Cys-38–Cys-62, Cys-64–Cys-75, and Cys-76–Cys-81.

This sequence belongs to the three-finger toxin family. Short-chain subfamily. Type I alpha-neurotoxin sub-subfamily. Expressed by the venom gland.

It localises to the secreted. Its function is as follows. Binds to muscle nicotinic acetylcholine receptor (nAChR) and inhibit acetylcholine from binding to the receptor, thereby impairing neuromuscular transmission. The chain is Short neurotoxin 1 from Oxyuranus scutellatus scutellatus (Australian taipan).